We begin with the raw amino-acid sequence, 156 residues long: MPRKGPAPKHAVVVDPVYGSALVTALVNKVLMSGKKSVAERIVYGALEGAKNKTGNDPVVTLKRALDNVKPTLEVRSRRVGGATYQVPVEVRAGRSTTLALRWIVGYSRARREKTMTERLMNELIDASNGLGASVKRREDTHKMAESNKAFAHYRW.

This sequence belongs to the universal ribosomal protein uS7 family. Part of the 30S ribosomal subunit. Contacts proteins S9 and S11.

One of the primary rRNA binding proteins, it binds directly to 16S rRNA where it nucleates assembly of the head domain of the 30S subunit. Is located at the subunit interface close to the decoding center, probably blocks exit of the E-site tRNA. The polypeptide is Small ribosomal subunit protein uS7 (Frankia alni (strain DSM 45986 / CECT 9034 / ACN14a)).